We begin with the raw amino-acid sequence, 215 residues long: Protein GET1 (215 aa).

Residues 1 to 4 (MINL) lie on the Lumenal side of the membrane. The helical transmembrane segment at 5 to 24 (ALVIFLCTLLNQIVSWVGKS) threads the bilayer. The Cytoplasmic segment spans residues 25–108 (VLQEIAFTAY…SFSKKFSTLL (84 aa)). Residues 73 to 94 (AKLRRKLDKGLADLEKTNNTLS) adopt a coiled-coil conformation. The chain crosses the membrane as a helical span at residues 109-129 (WLMTTGAQFLLSWWFRKQPIF). Topologically, residues 130–153 (WLPEGWVPYPVAWLLSFPSAPIGS) are lumenal. A helical transmembrane segment spans residues 154 to 170 (VSSGAWGAICRRVLSTL). Over 171-215 (QEIIQSLLAPSPAATGPVPTGPSSAKNDQPEAKIEALALEHEKLD) the chain is Cytoplasmic. Residues 182–202 (PAATGPVPTGPSSAKNDQPEA) form a disordered region.

It belongs to the WRB/GET1 family. In terms of assembly, interacts with GET3.

It is found in the endoplasmic reticulum membrane. Its function is as follows. Required for the post-translational delivery of tail-anchored (TA) proteins to the endoplasmic reticulum. Acts as a membrane receptor for soluble GET3, which recognizes and selectively binds the transmembrane domain of TA proteins in the cytosol. The sequence is that of Protein GET1 from Cryptococcus neoformans var. neoformans serotype D (strain JEC21 / ATCC MYA-565) (Filobasidiella neoformans).